The primary structure comprises 451 residues: Target of rapamycin complex 1 subunit tco89 (451 aa).

The segment at Met-1–Ile-35 is disordered. Positions Ser-7–Thr-17 are enriched in low complexity. Ser-70 carries the phosphoserine modification. 3 disordered regions span residues Trp-122 to Arg-164, Ile-176 to Leu-264, and Asn-362 to Tyr-437. The segment covering Asn-129–Val-162 has biased composition (polar residues). Over residues Asp-203–Ser-215 the composition is skewed to low complexity. 3 stretches are compositionally biased toward polar residues: residues His-228–Lys-242, Asn-362–Ala-376, and Gln-407–Ala-417. Over residues Ser-419–Lys-430 the composition is skewed to basic residues.

It belongs to the TORC subunit TCO89 family. In terms of assembly, the target of rapamycin complex 1 (TORC1) is composed of at least mip1, pop3/wat1, tco89, toc1 and tor2. In terms of processing, either Thr-10, Ser-11, Ser-12, Ser-13 or Thr-14 and Ser-214 or Ser-215 and Ser-247 or Ser-249 are phosphorylated as well.

Its subcellular location is the cytoplasm. Component of TORC1, which regulates multiple cellular processes to control cell growth in response to environmental signals. Tor2 is essential for growth. Nutrient limitation and environmental stress signals cause inactivation of TORC1. Active TORC1 positively controls cell growth and ribosome biogenesis by regulating ribosomal protein gene expression. TORC1 negatively controls G1 cell-cycle arrest, sexual development and amino acid uptake. Represses mating, meiosis and sporulation efficiency by interfering with the functions of the transcription factor ste11 and the meiosis-promoting RNA-binding protein mei2. This Schizosaccharomyces pombe (strain 972 / ATCC 24843) (Fission yeast) protein is Target of rapamycin complex 1 subunit tco89.